The sequence spans 234 residues: MAIEKKFITDGVRNVRVEKFLTKELKRAGYGGMDIARTPLGTQVTIFAEKPGIVIGKGGKQVRQLTQDLATDYDIESPQVEVQQVQNPNFNAQIMAERLANALERGWYFRKAGSSTIRRIMESGALGCEVIVAGKLTGSRSRTQKFTEGYIKHCGEPSETIVEKGYALAIKKLGTIGVQVKIVPPDARLPDAFDVLEPEPKKAPAEPIEPEEVGDDVFEEEFEETSEEEYVEEV.

The KH type-2 domain occupies 17–86; the sequence is VEKFLTKELK…SPQVEVQQVQ (70 aa).

It belongs to the universal ribosomal protein uS3 family. In terms of assembly, part of the 30S ribosomal subunit.

Its function is as follows. Binds the lower part of the 30S subunit head. The sequence is that of Small ribosomal subunit protein uS3 from Methanoculleus marisnigri (strain ATCC 35101 / DSM 1498 / JR1).